Consider the following 332-residue polypeptide: MTHLHAGLNPETIEKGRLELNENPDTLHQDIQQVRDMIITRPDIGFLRTDDAFILRFLRARKFNQMEAFRLLAQYFQYRQLNLDMFKNLKADDPGIKRALMDGFPGVLENRDHYGRKILLLFAANWDQSRNSFVDILRAILLSLEVLIEDQELQINGFILIIDWSNFSFKQASKLTPSILRLAIEGLQDSFPARFGGVHFVNQPWYIHALYTIIKPFLKDKTRKRIFLHGNNLNSLHQLIHPDCLPSEFGGTLPPYDMGTWARTLLGPDYNDENEYTHSSYNVIHVKHVPAIVEGEDSPKYMKRSHSVVEPGTLRHEEERENENTQPLLALD.

In terms of domain architecture, CRAL-TRIO spans 96-257; the sequence is IKRALMDGFP…EFGGTLPPYD (162 aa). The interval 300-332 is disordered; that stretch reads KYMKRSHSVVEPGTLRHEEERENENTQPLLALD. Basic and acidic residues predominate over residues 313 to 323; that stretch reads TLRHEEERENE.

The protein localises to the golgi apparatus. It is found in the trans-Golgi network membrane. The protein resides in the early endosome membrane. It localises to the cytoplasmic vesicle. Its subcellular location is the clathrin-coated vesicle. In terms of biological role, required for normal morphology of late endosomes and/or lysosomes in neurons. Binds phosphatidylinositol 3,5-bisphosphate (PtdIns(3,5)P2). The chain is Clavesin-1 (clvs1) from Xenopus laevis (African clawed frog).